The primary structure comprises 265 residues: Dimethylsulfide dehydrogenase subunit gamma (265 aa).

The N-terminal stretch at Met1 to Ala25 is a signal peptide. 2 residues coordinate heme b: His81 and Met147.

In terms of assembly, heterotrimer of alpha, beta and gamma subunits. Requires heme b as cofactor.

The protein localises to the periplasm. May transfer electrons to the iron-sulfur centers of DdhB. The protein is Dimethylsulfide dehydrogenase subunit gamma (ddhC) of Rhodovulum sulfidophilum (Rhodobacter sulfidophilus).